Reading from the N-terminus, the 609-residue chain is mRNA cap guanine-N(7) methyltransferase (609 aa).

Positions 1-10 (MASKEEERTG) are enriched in basic and acidic residues. The interval 1 to 252 (MASKEEERTG…EEDAMRNSQS (252 aa)) is disordered. Composition is skewed to low complexity over residues 28–47 (QPVV…ATPT) and 70–87 (PQTT…QQKQ). The segment covering 148–163 (ANDRPISKRKRLEERH) has biased composition (basic and acidic residues). Pro residues predominate over residues 193–205 (PRSPSPPLPPRSP). The segment covering 233 to 247 (RRQEERERALEEDAM) has biased composition (basic and acidic residues). The mRNA cap 0 methyltransferase domain maps to 278–590 (SKIKGLRSFN…KYTPLGFTSA (313 aa)). 287 to 288 (NN) lines the mRNA pocket. Residues K291, G314, D338, D379, 422 to 424 (MFA), and Y427 each bind S-adenosyl-L-methionine.

This sequence belongs to the class I-like SAM-binding methyltransferase superfamily. mRNA cap 0 methyltransferase family.

The protein resides in the nucleus. The enzyme catalyses a 5'-end (5'-triphosphoguanosine)-ribonucleoside in mRNA + S-adenosyl-L-methionine = a 5'-end (N(7)-methyl 5'-triphosphoguanosine)-ribonucleoside in mRNA + S-adenosyl-L-homocysteine. Its function is as follows. Responsible for methylating the 5'-cap structure of mRNAs. In Aspergillus niger (strain ATCC MYA-4892 / CBS 513.88 / FGSC A1513), this protein is mRNA cap guanine-N(7) methyltransferase (abd1).